Here is a 395-residue protein sequence, read N- to C-terminus: ATP phosphoribosyltransferase regulatory subunit (395 aa).

The protein belongs to the class-II aminoacyl-tRNA synthetase family. HisZ subfamily. In terms of assembly, heteromultimer composed of HisG and HisZ subunits.

The protein resides in the cytoplasm. The protein operates within amino-acid biosynthesis; L-histidine biosynthesis; L-histidine from 5-phospho-alpha-D-ribose 1-diphosphate: step 1/9. In terms of biological role, required for the first step of histidine biosynthesis. May allow the feedback regulation of ATP phosphoribosyltransferase activity by histidine. The sequence is that of ATP phosphoribosyltransferase regulatory subunit from Pseudomonas fluorescens (strain ATCC BAA-477 / NRRL B-23932 / Pf-5).